The following is a 464-amino-acid chain: Serine carboxypeptidase-like 22 (464 aa).

A signal peptide spans 1-22; it reads MARTHLLFLLFVLLSLATSSTS. Residues Asn52, Asn113, and Asn137 are each glycosylated (N-linked (GlcNAc...) asparagine). 3 disulfides stabilise this stretch: Cys86/Cys346, Cys247/Cys258, and Cys282/Cys314. Residue Ser179 is part of the active site. Residues Asn290 and Asn335 are each glycosylated (N-linked (GlcNAc...) asparagine). Active-site residues include Asp385 and His437.

It belongs to the peptidase S10 family. As to expression, expression not detected.

The protein localises to the secreted. Functionally, probable carboxypeptidase. This is Serine carboxypeptidase-like 22 (SCPL22) from Arabidopsis thaliana (Mouse-ear cress).